Reading from the N-terminus, the 111-residue chain is BET1-like protein (111 aa).

Topologically, residues M1–K86 are cytoplasmic. A phosphoserine mark is found at S9 and S37. The region spanning D15–M77 is the t-SNARE coiled-coil homology domain. A helical; Anchor for type IV membrane protein membrane pass occupies residues L87–S107. The Lumenal portion of the chain corresponds to R108 to T111.

In terms of assembly, component of a SNARE complex consisting of STX5, YKT6, GOSR1 and BET1L. Interacts with STX5.

It localises to the golgi apparatus membrane. It is found in the golgi apparatus. The protein localises to the trans-Golgi network membrane. Functionally, vesicle SNARE required for targeting and fusion of retrograde transport vesicles with the Golgi complex. Required for the integrity of the Golgi complex. This is BET1-like protein from Mus musculus (Mouse).